We begin with the raw amino-acid sequence, 75 residues long: Small ribosomal subunit protein bS18 (75 aa).

It belongs to the bacterial ribosomal protein bS18 family. Part of the 30S ribosomal subunit. Forms a tight heterodimer with protein bS6.

Its function is as follows. Binds as a heterodimer with protein bS6 to the central domain of the 16S rRNA, where it helps stabilize the platform of the 30S subunit. The protein is Small ribosomal subunit protein bS18 of Chromobacterium violaceum (strain ATCC 12472 / DSM 30191 / JCM 1249 / CCUG 213 / NBRC 12614 / NCIMB 9131 / NCTC 9757 / MK).